The following is a 382-amino-acid chain: MKRDYYEVLGVSRSADKDEIKKAYRKLALKYHPDKNPDNKDAEDHFKEVNEAYEVLSNDDKRRRYDQFGHAGVGSSAASGGGGGQYGGGADFSDIFSAFNDMFGGGGGGSQRRRAASGIPGVDLKIRLKLTLEEIAKGVEKTIKIKKQVPCKECNGSGSKTGATETCPTCHGAGEVRQASKTMFGQFVNIAACPTCGGEGRIVKDRCPSCYGEGIKQGEVTVKVNVPAGVQEGNYLTLRGQGNSGPRGGAPGDLIVMIEEKPHELFVRNGDDVIYSLAVSFPDLVLGTKVDVPTLEGAVKLTIPAGTQPETMLRIPGHGIGHLRGSGKGDQYVRVNVYVPKELTQQDKDLLRDLRKSPSIAPEAHSAGGAKSFFEKARDIFG.

The J domain maps to 4-69 (DYYEVLGVSR…DKRRRYDQFG (66 aa)). A CR-type zinc finger spans residues 138-219 (GVEKTIKIKK…CYGEGIKQGE (82 aa)). Zn(2+)-binding residues include C151, C154, C167, C170, C193, C196, C207, and C210. 4 CXXCXGXG motif repeats span residues 151 to 158 (CKECNGSG), 167 to 174 (CPTCHGAG), 193 to 200 (CPTCGGEG), and 207 to 214 (CPSCYGEG).

This sequence belongs to the DnaJ family. As to quaternary structure, homodimer. Zn(2+) serves as cofactor.

It localises to the cytoplasm. Participates actively in the response to hyperosmotic and heat shock by preventing the aggregation of stress-denatured proteins and by disaggregating proteins, also in an autonomous, DnaK-independent fashion. Unfolded proteins bind initially to DnaJ; upon interaction with the DnaJ-bound protein, DnaK hydrolyzes its bound ATP, resulting in the formation of a stable complex. GrpE releases ADP from DnaK; ATP binding to DnaK triggers the release of the substrate protein, thus completing the reaction cycle. Several rounds of ATP-dependent interactions between DnaJ, DnaK and GrpE are required for fully efficient folding. Also involved, together with DnaK and GrpE, in the DNA replication of plasmids through activation of initiation proteins. The protein is Chaperone protein DnaJ of Chlorobium luteolum (strain DSM 273 / BCRC 81028 / 2530) (Pelodictyon luteolum).